The primary structure comprises 692 residues: Elongation factor G (692 aa).

Residues 8–282 (EKTRNIGIMA…AIVDYLPAPT (275 aa)) enclose the tr-type G domain. Residues 17-24 (AHIDAGKT), 81-85 (DTPGH), and 135-138 (NKMD) each bind GTP.

It belongs to the TRAFAC class translation factor GTPase superfamily. Classic translation factor GTPase family. EF-G/EF-2 subfamily.

It is found in the cytoplasm. Functionally, catalyzes the GTP-dependent ribosomal translocation step during translation elongation. During this step, the ribosome changes from the pre-translocational (PRE) to the post-translocational (POST) state as the newly formed A-site-bound peptidyl-tRNA and P-site-bound deacylated tRNA move to the P and E sites, respectively. Catalyzes the coordinated movement of the two tRNA molecules, the mRNA and conformational changes in the ribosome. The sequence is that of Elongation factor G from Pelotomaculum thermopropionicum (strain DSM 13744 / JCM 10971 / SI).